Here is a 168-residue protein sequence, read N- to C-terminus: Probable deoxyuridine 5'-triphosphate nucleotidohydrolase (168 aa).

The protein belongs to the dCTP deaminase family. Archaeal dUTPase subfamily.

It catalyses the reaction dUTP + H2O = dUMP + diphosphate + H(+). It participates in pyrimidine metabolism; dUMP biosynthesis; dUMP from dCTP (dUTP route): step 2/2. This enzyme is involved in nucleotide metabolism: it produces dUMP, the immediate precursor of thymidine nucleotides and it decreases the intracellular concentration of dUTP so that uracil cannot be incorporated into DNA. The protein is Probable deoxyuridine 5'-triphosphate nucleotidohydrolase of Archaeoglobus fulgidus (strain ATCC 49558 / DSM 4304 / JCM 9628 / NBRC 100126 / VC-16).